The chain runs to 144 residues: Large ribosomal subunit protein uL15 (144 aa).

Positions 1 to 57 are disordered; that stretch reads MKLNDLSPAPGSRREKHRPGRGIGSGLGKTGGRGHKGQSSRSGGTIAPGFEGGQQPL. Gly residues predominate over residues 21-31; it reads RGIGSGLGKTG.

This sequence belongs to the universal ribosomal protein uL15 family. Part of the 50S ribosomal subunit.

In terms of biological role, binds to the 23S rRNA. This is Large ribosomal subunit protein uL15 from Pseudomonas savastanoi pv. phaseolicola (strain 1448A / Race 6) (Pseudomonas syringae pv. phaseolicola (strain 1448A / Race 6)).